A 29-amino-acid polypeptide reads, in one-letter code: Photosystem I reaction center subunit XII (29 aa).

Residues 7–24 form a helical membrane-spanning segment; it reads FVALLLALVPAVLAYRLG.

It belongs to the PsaM family.

The protein resides in the cellular thylakoid membrane. The chain is Photosystem I reaction center subunit XII from Synechococcus sp. (strain ATCC 27144 / PCC 6301 / SAUG 1402/1) (Anacystis nidulans).